The chain runs to 489 residues: N-succinylglutamate 5-semialdehyde dehydrogenase (489 aa).

G223 to G228 provides a ligand contact to NAD(+). Catalysis depends on residues E246 and C280.

This sequence belongs to the aldehyde dehydrogenase family. AstD subfamily.

It carries out the reaction N-succinyl-L-glutamate 5-semialdehyde + NAD(+) + H2O = N-succinyl-L-glutamate + NADH + 2 H(+). It functions in the pathway amino-acid degradation; L-arginine degradation via AST pathway; L-glutamate and succinate from L-arginine: step 4/5. Its function is as follows. Catalyzes the NAD-dependent reduction of succinylglutamate semialdehyde into succinylglutamate. This chain is N-succinylglutamate 5-semialdehyde dehydrogenase, found in Aeromonas hydrophila subsp. hydrophila (strain ATCC 7966 / DSM 30187 / BCRC 13018 / CCUG 14551 / JCM 1027 / KCTC 2358 / NCIMB 9240 / NCTC 8049).